The chain runs to 399 residues: Carbamoyl phosphate synthase small chain (399 aa).

A CPSase region spans residues 1–206; it reads MTQTIPSPKP…NKGYKTNNDA (206 aa). S60, G258, and G260 together coordinate L-glutamine. Residues 210–398 enclose the Glutamine amidotransferase type-1 domain; the sequence is HIVAIDYGIK…FNLIMDYKKT (189 aa). C287 (nucleophile) is an active-site residue. Residues L288, Q291, N329, G331, and F332 each coordinate L-glutamine. Catalysis depends on residues H371 and E373.

It belongs to the CarA family. Composed of two chains; the small (or glutamine) chain promotes the hydrolysis of glutamine to ammonia, which is used by the large (or ammonia) chain to synthesize carbamoyl phosphate. Tetramer of heterodimers (alpha,beta)4.

The catalysed reaction is hydrogencarbonate + L-glutamine + 2 ATP + H2O = carbamoyl phosphate + L-glutamate + 2 ADP + phosphate + 2 H(+). It carries out the reaction L-glutamine + H2O = L-glutamate + NH4(+). The protein operates within amino-acid biosynthesis; L-arginine biosynthesis; carbamoyl phosphate from bicarbonate: step 1/1. Its pathway is pyrimidine metabolism; UMP biosynthesis via de novo pathway; (S)-dihydroorotate from bicarbonate: step 1/3. Functionally, small subunit of the glutamine-dependent carbamoyl phosphate synthetase (CPSase). CPSase catalyzes the formation of carbamoyl phosphate from the ammonia moiety of glutamine, carbonate, and phosphate donated by ATP, constituting the first step of 2 biosynthetic pathways, one leading to arginine and/or urea and the other to pyrimidine nucleotides. The small subunit (glutamine amidotransferase) binds and cleaves glutamine to supply the large subunit with the substrate ammonia. In Bartonella henselae (strain ATCC 49882 / DSM 28221 / CCUG 30454 / Houston 1) (Rochalimaea henselae), this protein is Carbamoyl phosphate synthase small chain.